The sequence spans 1074 residues: MTGPHAAGGSNHRTARLVAIIAGLLGTLMAIATPLLPVEQTTAELNWPQNGVWQSVDAPLIGYVATDLTVTVPCQAAAGLVGPENRNRSVLLSTVPKQAPKAIDRGLLIERINNDLTVIVRNTPVVSAPLEQVLSPDCRYLTFTAHADKVTGEFVGLTQGPDDDDPGEAVRGERSGYDFRPQIVGVFTDLSGPAPEGLQLSATIDTRYSTSPTLLKLLAMIVGVAMTVIALGALHVLDCADGRRHKRFLPSRWWSMTPLDGLVSAMLVWWHFVGANTADDGYILTMARVSEHAGYMANYYRWFGTPESPFGWYYDLLALWAHVSTASVWMRFPTLLMGLACWWVISREVIPRLGAAAKHSRAAAWTAAGLFLAFWLPLNNGLRPEPIIALGILLTWCSVERGVATSRLLPVAVAIIIGALTLFSGPTGIAAVGALLVAIGPLKTIVAAHVSRFGYWALLAPIAAAGTVTIFLIFRDQTLAAELQASSFKSAVGPSLAWFDEHIRYSRLFTTSPDGSVARRFAVLTLLLALAVSIAMTLRKGRIPGTALGPSRRIIGITIISFLAMMFTPTKWTHQFGVFAGLAGCLGALAAVAVTTTAMKSRRNRTVFGAAVLFVTALSFATVNGWWYVSNFGVPWSNSFPEFKFGFTTMLLGLSVLALLVAAWFHFSGRDVSPDRPQRRWQRLLVAPLAVATWALVIFEVVSLTLGMINQYPAWSVGRSNLNALTGKTCGLANDVLVEQNANAGMLTPIGEPAGQALGAVTSLGFGPNGIPSDVSADPVMEQPGTDNFADSDSGVVTGTEVGTEGGTTAAAGINGSRARLPYGLNPATTPVLGSWRSGTQQPAVLRSAWYRLPDRDQAGPLLVVSAAGRFDQGEVEVQWATDEQAAANEPGGSITFGDVGAAPAWRNLRAPLSSIPPEATQIRLVASDDDLAPQHWIALTPPRIPELRTLQEVVGSSDPVMLDWLVGLAFPCQRPFDHRYGVVEVPKWRILPDRFGAEANSPVMDYLGGGPLGITELLLRPSSVPTYLKDDWYRDWGSLQRLTPWYPDAQPARLDLGTATRSGWWSPAPLRLS.

10 helical membrane-spanning segments follow: residues Ala-15–Pro-37, Leu-214–Val-236, Ser-251–Val-273, Ile-415–Val-437, Arg-452–Phe-474, Ser-516–Leu-538, Thr-573–Thr-595, Phe-608–Ser-630, Phe-645–Phe-667, and Leu-684–Leu-706.

Belongs to the emb family.

It is found in the cell membrane. In terms of biological role, arabinosyl transferase responsible for the polymerization of arabinose into the arabinan of arabinogalactan. This Mycolicibacterium smegmatis (Mycobacterium smegmatis) protein is Probable arabinosyltransferase C (embC).